The following is a 175-amino-acid chain: NADH-ubiquinone oxidoreductase chain 6 (175 aa).

The next 5 helical transmembrane spans lie at 1-21, 25-45, 47-67, 88-108, and 149-169; these read MMTY…VGFS, SPIY…GIVL, FGGS…MMVV, VVLG…YYVL, and YGTW…VVIM.

This sequence belongs to the complex I subunit 6 family. Core subunit of respiratory chain NADH dehydrogenase (Complex I) which is composed of 45 different subunits.

Its subcellular location is the mitochondrion inner membrane. It catalyses the reaction a ubiquinone + NADH + 5 H(+)(in) = a ubiquinol + NAD(+) + 4 H(+)(out). Functionally, core subunit of the mitochondrial membrane respiratory chain NADH dehydrogenase (Complex I) which catalyzes electron transfer from NADH through the respiratory chain, using ubiquinone as an electron acceptor. Essential for the catalytic activity and assembly of complex I. The chain is NADH-ubiquinone oxidoreductase chain 6 (MT-ND6) from Ovis aries (Sheep).